The following is a 334-amino-acid chain: Protein CUP-SHAPED COTYLEDON 3 (334 aa).

In terms of domain architecture, NAC spans Leu-22–Lys-171. A DNA-binding region spans residues Val-121–Asn-177.

As to expression, in a general manner, present at the boundaries between mersitems and araising primordia.

It is found in the nucleus. In terms of biological role, transcription activator. Involved in molecular mechanisms regulating shoot apical meristem (SAM) formation during embryogenesis and organ separation. Required for axillary meristem initiation and separation of the meristem from the main stem. May act as an inhibitor of cell division. The chain is Protein CUP-SHAPED COTYLEDON 3 (NAC031) from Arabidopsis thaliana (Mouse-ear cress).